The chain runs to 181 residues: Cytochrome b6-f complex iron-sulfur subunit (181 aa).

Positions 1–35 (MAQTGNFKSPARMSSLGQGAAPASSGAVTGGKPRE) are disordered. 2 consecutive transmembrane segments (helical) span residues 53–73 (VGGVGAVVAVSTLYPVVKYII) and 114–134 (GGALTAVSAVCTHLGCLVNWV). One can recognise a Rieske domain in the interval 85-178 (LTVGKASEVP…ARIEGDSIII (94 aa)). Residues cysteine 124, histidine 126, cysteine 142, and histidine 145 each coordinate [2Fe-2S] cluster. A disulfide bridge connects residues cysteine 129 and cysteine 144.

It belongs to the Rieske iron-sulfur protein family. It depends on [2Fe-2S] cluster as a cofactor.

Its subcellular location is the cell inner membrane. The enzyme catalyses 2 oxidized [plastocyanin] + a plastoquinol + 2 H(+)(in) = 2 reduced [plastocyanin] + a plastoquinone + 4 H(+)(out). Functionally, component of the green S-bacteria bc-complex which consists of the Rieske protein and cytochrome b subunit and which appears to lack a cytochrome c1-equivalent. This complex has a comparatively low redox potential. The chain is Cytochrome b6-f complex iron-sulfur subunit (petC) from Chlorobaculum thiosulfatiphilum (Chlorobium limicola f.sp. thiosulfatophilum).